The chain runs to 162 residues: Phosphopantetheine adenylyltransferase (162 aa).

Ser-9 contacts substrate. ATP-binding positions include 9–10 (SF) and His-17. 3 residues coordinate substrate: Lys-41, Thr-73, and Arg-87. Residues 88–90 (GLR), Glu-98, and 122–128 (NQNISSS) contribute to the ATP site.

This sequence belongs to the bacterial CoaD family. Homohexamer. Mg(2+) serves as cofactor.

The protein resides in the cytoplasm. It catalyses the reaction (R)-4'-phosphopantetheine + ATP + H(+) = 3'-dephospho-CoA + diphosphate. It functions in the pathway cofactor biosynthesis; coenzyme A biosynthesis; CoA from (R)-pantothenate: step 4/5. Functionally, reversibly transfers an adenylyl group from ATP to 4'-phosphopantetheine, yielding dephospho-CoA (dPCoA) and pyrophosphate. This Leuconostoc mesenteroides subsp. mesenteroides (strain ATCC 8293 / DSM 20343 / BCRC 11652 / CCM 1803 / JCM 6124 / NCDO 523 / NBRC 100496 / NCIMB 8023 / NCTC 12954 / NRRL B-1118 / 37Y) protein is Phosphopantetheine adenylyltransferase.